We begin with the raw amino-acid sequence, 217 residues long: Aprataxin-like protein (217 aa).

In terms of domain architecture, HIT spans 6-139; that stretch reads ALKNYVTSPE…HIHVISKDFH (134 aa). 3 interaction with DNA regions span residues 34 to 38, 121 to 132, and 144 to 148; these read DSFPK, HSVPSMANLHIH, and KNKKH. His-130 functions as the Nucleophile in the catalytic mechanism. Zn(2+) contacts are provided by Cys-188, Cys-191, His-205, and Glu-209.

It is found in the nucleus. The protein localises to the cytoplasm. It carries out the reaction a 5'-end adenosine-5'-diphospho-5'-2'-deoxyribonucleoside-DNA + H2O = a 5'-end 5'-phospho-2'-deoxyribonucleoside-DNA + AMP + 2 H(+). The enzyme catalyses a 5'-end adenosine-5'-diphospho-5'-ribonucleoside-2'-deoxyribonucleotide-DNA + H2O = a 5'-end 5'-phospho-ribonucleoside-2'-deoxyribonucleotide-DNA + AMP + 2 H(+). It catalyses the reaction a 3'-end 2'-deoxyribonucleotide-3'-diphospho-5'-guanosine-DNA + H2O = a 3'-end 2'-deoxyribonucleotide 3'-phosphate-DNA + GMP + 2 H(+). Its function is as follows. DNA-binding protein involved in single-strand DNA break repair, double-strand DNA break repair and base excision repair. Resolves abortive DNA ligation intermediates formed either at base excision sites, or when DNA ligases attempt to repair non-ligatable breaks induced by reactive oxygen species. Catalyzes the release of adenylate groups covalently linked to 5'-phosphate termini, resulting in the production of 5'-phosphate termini that can be efficiently rejoined. Likewise, catalyzes the release of 3'-linked guanosine (DNAppG) and inosine (DNAppI) from DNA, but has higher specific activity with 5'-linked adenosine (AppDNA). This is Aprataxin-like protein (HNT3) from Saccharomyces cerevisiae (strain ATCC 204508 / S288c) (Baker's yeast).